A 116-amino-acid chain; its full sequence is Large ribosomal subunit protein bL20 (116 aa).

It belongs to the bacterial ribosomal protein bL20 family.

Binds directly to 23S ribosomal RNA and is necessary for the in vitro assembly process of the 50S ribosomal subunit. It is not involved in the protein synthesizing functions of that subunit. The chain is Large ribosomal subunit protein bL20 from Acaryochloris marina (strain MBIC 11017).